The chain runs to 438 residues: UDP-glycosyltransferase 84B2 (438 aa).

Residues serine 260, 314-316 (GQQ), 331-339 (HCGWNSTIE), and 353-356 (WIDQ) contribute to the UDP-alpha-D-glucose site.

The protein belongs to the UDP-glycosyltransferase family.

The protein is UDP-glycosyltransferase 84B2 (UGT84B2) of Arabidopsis thaliana (Mouse-ear cress).